A 115-amino-acid polypeptide reads, in one-letter code: NADH-ubiquinone oxidoreductase chain 3 (115 aa).

A run of 3 helical transmembrane segments spans residues 3-23, 55-75, and 84-104; these read LLLTLLTNTTLALLLVFIAFW, FFLVAITFLLFDLEIALLLPL, and LNTMLTMALFLISLLAASLAY.

Belongs to the complex I subunit 3 family. In terms of assembly, core subunit of respiratory chain NADH dehydrogenase (Complex I) which is composed of 45 different subunits. Interacts with TMEM186. Interacts with TMEM242.

The protein localises to the mitochondrion inner membrane. The catalysed reaction is a ubiquinone + NADH + 5 H(+)(in) = a ubiquinol + NAD(+) + 4 H(+)(out). Core subunit of the mitochondrial membrane respiratory chain NADH dehydrogenase (Complex I) which catalyzes electron transfer from NADH through the respiratory chain, using ubiquinone as an electron acceptor. Essential for the catalytic activity of complex I. The sequence is that of NADH-ubiquinone oxidoreductase chain 3 from Balaenoptera musculus (Blue whale).